A 209-amino-acid polypeptide reads, in one-letter code: Large ribosomal subunit protein uL3 (209 aa).

The residue at position 150 (Q150) is an N5-methylglutamine.

Belongs to the universal ribosomal protein uL3 family. In terms of assembly, part of the 50S ribosomal subunit. Forms a cluster with proteins L14 and L19. Methylated by PrmB.

One of the primary rRNA binding proteins, it binds directly near the 3'-end of the 23S rRNA, where it nucleates assembly of the 50S subunit. This chain is Large ribosomal subunit protein uL3, found in Cronobacter sakazakii (strain ATCC BAA-894) (Enterobacter sakazakii).